Reading from the N-terminus, the 317-residue chain is Olfactory receptor 10A5 (317 aa).

The Extracellular portion of the chain corresponds to 1–26 (MAIGNWTEISEFILMSFSSLPTEIQS). Asn-5 is a glycosylation site (N-linked (GlcNAc...) asparagine). A helical transmembrane segment spans residues 27 to 47 (LLFLTFLTIYLVTLKGNSLII). Over 48–55 (LVTLADPM) the chain is Cytoplasmic. A helical membrane pass occupies residues 56–76 (LHSPMYFFLRNLSFLEIGFNL). The Extracellular portion of the chain corresponds to 77–100 (VIVPKMLGTLLAQDTTISFLGCAT). The cysteines at positions 98 and 190 are disulfide-linked. A helical membrane pass occupies residues 101–121 (QMYFFFFFGVAECFLLATMAY). The Cytoplasmic segment spans residues 122-140 (DRYVAICSPLHYPVIMNQR). The helical transmembrane segment at 141–161 (TRAKLAAASWFPGFPVATVQT) threads the bilayer. Residues 162–198 (TWLFSFPFCGTNKVNHFFCDSPPVLKLVCADTALFEI) lie on the Extracellular side of the membrane. The chain crosses the membrane as a helical span at residues 199–218 (YAIVGTILVVMIPCLLILCS). The Cytoplasmic portion of the chain corresponds to 219 to 238 (YTRIAAAILKIPSAKGKHKA). The chain crosses the membrane as a helical span at residues 239 to 259 (FSTCSSHLLVVSLFYISSSLT). Topologically, residues 260–272 (YFWPKSNNSPESK) are extracellular. The chain crosses the membrane as a helical span at residues 273–293 (KLLSLSYTVVTPMLNPIIYSL). Residues 294–317 (RNSEVKNALSRTFHKVLALRNCIP) lie on the Cytoplasmic side of the membrane.

The protein belongs to the G-protein coupled receptor 1 family. In terms of tissue distribution, expressed in the tongue.

Its subcellular location is the cell membrane. Functionally, odorant receptor (Potential). May be involved in taste perception. In Homo sapiens (Human), this protein is Olfactory receptor 10A5 (OR10A5).